A 111-amino-acid polypeptide reads, in one-letter code: Large ribosomal subunit protein uL23 (111 aa).

This sequence belongs to the universal ribosomal protein uL23 family. In terms of assembly, part of the 50S ribosomal subunit. Contacts protein L29, and trigger factor when it is bound to the ribosome.

In terms of biological role, one of the early assembly proteins it binds 23S rRNA. One of the proteins that surrounds the polypeptide exit tunnel on the outside of the ribosome. Forms the main docking site for trigger factor binding to the ribosome. The chain is Large ribosomal subunit protein uL23 from Chlamydia abortus (strain DSM 27085 / S26/3) (Chlamydophila abortus).